We begin with the raw amino-acid sequence, 398 residues long: Cholinephosphotransferase 1 (398 aa).

The residue at position 2 (alanine 2) is an N-acetylalanine. The Cytoplasmic portion of the chain corresponds to 2-62; that stretch reads AAGAGARPAP…LLQWIPLWIA (61 aa). A helical membrane pass occupies residues 63 to 83; that stretch reads PNTITLFGLAINLFTTLVLIF. Asparagine 64 serves as a coordination point for CDP-choline. The Lumenal segment spans residues 84-93; sequence YCPTVTEEAP. Residues 94–118 traverse the membrane as a helical segment; sequence YWTYLLCALGLFIYQSLDAIDGKQA. Residues aspartate 111 and aspartate 114 each contribute to the Mg(2+) site. Arginine 119 lines the CDP-choline pocket. Topologically, residues 119 to 125 are cytoplasmic; that stretch reads RRTNSCS. The helical transmembrane segment at 126 to 150 threads the bilayer; the sequence is PLGELFDHGCDSLSTVFMAIGASIA. A Mg(2+)-binding site is contributed by aspartate 132. Catalysis depends on histidine 133, which acts as the Proton acceptor. Aspartate 136 is a binding site for Mg(2+). The Lumenal portion of the chain corresponds to 151–160; that stretch reads VRLGTHPDWL. Residues 161 to 179 traverse the membrane as a helical segment; that stretch reads FFCSFVGMFMFYCAHWQTY. Residues 180-190 lie on the Cytoplasmic side of the membrane; that stretch reads VSGVLRFGRVD. Residues 191–207 traverse the membrane as a helical segment; the sequence is VTEIQVALVIVFLLSTF. At 208–222 the chain is on the lumenal side; that stretch reads GGAMMWDYTIPILEI. Residues 223–248 traverse the membrane as a helical segment; the sequence is KLKILPVLGVVGGLIFSCSNYFHVIL. Residues 249–265 lie on the Cytoplasmic side of the membrane; that stretch reads HGGVGKNGSTIAGTSVL. A helical transmembrane segment spans residues 266-281; that stretch reads SPGLHIGLIIILAIMI. Topologically, residues 282–293 are lumenal; it reads YKKSATNVFEKH. The chain crosses the membrane as a helical span at residues 294–316; the sequence is PCLYTLMFGCVFAKVAQKLVIAH. Topologically, residues 317 to 329 are cytoplasmic; that stretch reads MTKSELYLQDTVF. The helical transmembrane segment at 330–339 threads the bilayer; the sequence is IGPGLLFLDQ. At 340-346 the chain is on the lumenal side; the sequence is YFNNFID. Residues 347–376 form a helical membrane-spanning segment; it reads EYVVLWIAMVITSFDMMIYFSSLCLQISRH. Residues 377 to 398 lie on the Cytoplasmic side of the membrane; it reads LHLSIFKTSYQQAPEQVHKHID.

This sequence belongs to the CDP-alcohol phosphatidyltransferase class-I family. Requires Mg(2+) as cofactor. The cofactor is Mn(2+).

It is found in the golgi apparatus membrane. The catalysed reaction is CDP-choline + a 1,2-diacyl-sn-glycerol = a 1,2-diacyl-sn-glycero-3-phosphocholine + CMP + H(+). It catalyses the reaction 1-octadecanoyl-2-(5Z,8Z,11Z,14Z-eicosatetraenoyl)-sn-glycerol + CDP-choline = 1-octadecanoyl-2-(5Z,8Z,11Z,14Z-eicosatetraenoyl)-sn-glycero-3-phosphocholine + CMP + H(+). The enzyme catalyses 1-hexadecanoyl-2-(9Z-octadecenoyl)-sn-glycerol + CDP-choline = 1-hexadecanoyl-2-(9Z-octadecenoyl)-sn-glycero-3-phosphocholine + CMP + H(+). It carries out the reaction 1-hexadecanoyl-2-(4Z,7Z,10Z,13Z,16Z,19Z-docosahexaenoyl)-sn-glycerol + CDP-choline = 1-hexadecanoyl-2-(4Z,7Z,10Z,13Z,16Z,19Z-docosahexaenoyl)-sn-glycero-3-phosphocholine + CMP + H(+). The catalysed reaction is 1,2-dioctanoyl-sn-glycerol + CDP-choline = 1,2-dioctanoyl-sn-glycero-3-phosphocholine + CMP + H(+). It functions in the pathway phospholipid metabolism; phosphatidylcholine biosynthesis; phosphatidylcholine from phosphocholine: step 2/2. Catalyzes the final step of de novo phosphatidylcholine (PC) synthesis, i.e. the transfer of choline phosphate from CDP-choline to the free hydroxyl of a diacylglycerol (DAG), producing a PC. It thereby plays a central role in the formation and maintenance of vesicular membranes. The protein is Cholinephosphotransferase 1 of Rattus norvegicus (Rat).